A 648-amino-acid polypeptide reads, in one-letter code: 1-deoxy-D-xylulose-5-phosphate synthase 1 (648 aa).

Thiamine diphosphate contacts are provided by residues histidine 82 and 123–125 (AHS). Aspartate 154 provides a ligand contact to Mg(2+). Residues 155–156 (GS), asparagine 183, tyrosine 292, and glutamate 374 each bind thiamine diphosphate. Asparagine 183 lines the Mg(2+) pocket.

This sequence belongs to the transketolase family. DXPS subfamily. As to quaternary structure, homodimer. Mg(2+) is required as a cofactor. It depends on thiamine diphosphate as a cofactor.

It carries out the reaction D-glyceraldehyde 3-phosphate + pyruvate + H(+) = 1-deoxy-D-xylulose 5-phosphate + CO2. The protein operates within metabolic intermediate biosynthesis; 1-deoxy-D-xylulose 5-phosphate biosynthesis; 1-deoxy-D-xylulose 5-phosphate from D-glyceraldehyde 3-phosphate and pyruvate: step 1/1. Its function is as follows. Catalyzes the acyloin condensation reaction between C atoms 2 and 3 of pyruvate and glyceraldehyde 3-phosphate to yield 1-deoxy-D-xylulose-5-phosphate (DXP). The chain is 1-deoxy-D-xylulose-5-phosphate synthase 1 from Cereibacter sphaeroides (strain ATCC 17023 / DSM 158 / JCM 6121 / CCUG 31486 / LMG 2827 / NBRC 12203 / NCIMB 8253 / ATH 2.4.1.) (Rhodobacter sphaeroides).